The chain runs to 171 residues: ATP synthase subunit b (171 aa).

The helical transmembrane segment at Phe2 to Leu22 threads the bilayer.

This sequence belongs to the ATPase B chain family. F-type ATPases have 2 components, F(1) - the catalytic core - and F(0) - the membrane proton channel. F(1) has five subunits: alpha(3), beta(3), gamma(1), delta(1), epsilon(1). F(0) has three main subunits: a(1), b(2) and c(10-14). The alpha and beta chains form an alternating ring which encloses part of the gamma chain. F(1) is attached to F(0) by a central stalk formed by the gamma and epsilon chains, while a peripheral stalk is formed by the delta and b chains.

It is found in the cell inner membrane. F(1)F(0) ATP synthase produces ATP from ADP in the presence of a proton or sodium gradient. F-type ATPases consist of two structural domains, F(1) containing the extramembraneous catalytic core and F(0) containing the membrane proton channel, linked together by a central stalk and a peripheral stalk. During catalysis, ATP synthesis in the catalytic domain of F(1) is coupled via a rotary mechanism of the central stalk subunits to proton translocation. Its function is as follows. Component of the F(0) channel, it forms part of the peripheral stalk, linking F(1) to F(0). In Helicobacter pylori (strain Shi470), this protein is ATP synthase subunit b.